Reading from the N-terminus, the 1299-residue chain is MAP3K epsilon protein kinase 1 (1299 aa).

A Protein kinase domain is found at 20-274; it reads YMLGDEIGKG…AKTLLSHPWI (255 aa). HEAT repeat units follow at residues 25-62 and 86-125; these read EIGK…EDLN and LKTK…TVYI. ATP contacts are provided by residues 26 to 34 and lysine 49; that span reads IGKGAYGRV. Aspartate 144 acts as the Proton acceptor in catalysis. The stretch at 218-256 is one HEAT 3 repeat; the sequence is PYYDLQPMPALFRIVQDDSPPIPDSLSPDITDFLRQCFK. Disordered stretches follow at residues 291–458 and 483–509; these read IRYM…GNEL and GKLN…DGGK. Low complexity predominate over residues 374 to 385; sequence SSLQSSTCSISS. Composition is skewed to polar residues over residues 415 to 432 and 488 to 501; these read ATKQ…QRSH and ASAS…NQGD. HEAT repeat units lie at residues 532 to 570, 611 to 649, 653 to 694, 698 to 736, 743 to 780, 781 to 820, 868 to 900, 901 to 939, 955 to 994, 998 to 1036, 1043 to 1081, 1085 to 1122, 1125 to 1164, 1186 to 1210, 1211 to 1249, and 1279 to 1299; these read SNDG…LLPL, VFVT…DNID, NACL…SSSL, MFIA…VFKL, NDFC…SGQL, DQHE…PDGD, QPEQ…HIAG, LEKH…AASA, SDTS…ADTT, YMCS…DPNC, ADAI…INKR, QAAE…ASRN, EQLR…NDNR, CPER…RINT, TLAV…HHPR, and QVLV…NTVL. The interval 795-852 is disordered; that stretch reads VLKTRPGGGEEPSNSQRSDLYQPDGDRPRSSSAALDATEDVKQHHRISISSNRTSTDK.

It belongs to the protein kinase superfamily. Ser/Thr protein kinase family. In terms of processing, autophosphorylated. In terms of tissue distribution, expressed in both the sporophytic and the gametophytic tissues, especially in dividing cells.

It localises to the cytoplasm. The protein resides in the cytoskeleton. The protein localises to the microtubule organizing center. Its subcellular location is the nucleus. It is found in the nucleolus. It localises to the cell membrane. The catalysed reaction is L-seryl-[protein] + ATP = O-phospho-L-seryl-[protein] + ADP + H(+). It catalyses the reaction L-threonyl-[protein] + ATP = O-phospho-L-threonyl-[protein] + ADP + H(+). Its function is as follows. Serine/threonine-protein kinase involved in the spatial and temporal control system organizing cortical activities in mitotic and postmitotic cells. Required for the normal functioning of the plasma membrane in developing pollen. Involved in the regulation of cell expansion and embryo development. The polypeptide is MAP3K epsilon protein kinase 1 (Brassica napus (Rape)).